Consider the following 346-residue polypeptide: NADH-quinone oxidoreductase subunit H (346 aa).

The next 8 membrane-spanning stretches (helical) occupy residues isoleucine 6–tyrosine 26, valine 76–valine 96, isoleucine 128–alanine 148, isoleucine 166–leucine 186, leucine 198–phenylalanine 218, isoleucine 260–isoleucine 280, leucine 289–valine 309, and leucine 324–isoleucine 344.

Belongs to the complex I subunit 1 family. NDH-1 is composed of 14 different subunits. Subunits NuoA, H, J, K, L, M, N constitute the membrane sector of the complex.

It is found in the cell inner membrane. The catalysed reaction is a quinone + NADH + 5 H(+)(in) = a quinol + NAD(+) + 4 H(+)(out). In terms of biological role, NDH-1 shuttles electrons from NADH, via FMN and iron-sulfur (Fe-S) centers, to quinones in the respiratory chain. The immediate electron acceptor for the enzyme in this species is believed to be ubiquinone. Couples the redox reaction to proton translocation (for every two electrons transferred, four hydrogen ions are translocated across the cytoplasmic membrane), and thus conserves the redox energy in a proton gradient. This subunit may bind ubiquinone. In Leptospira interrogans serogroup Icterohaemorrhagiae serovar copenhageni (strain Fiocruz L1-130), this protein is NADH-quinone oxidoreductase subunit H.